A 486-amino-acid chain; its full sequence is dTDP-4-dehydro-6-deoxy-alpha-D-glucopyranose 2,3-dehydratase (486 aa).

Residues W66, 149–153, S187, W304, R367, 383–385, 388–389, and 421–424 contribute to the dTDP-4-dehydro-6-deoxy-alpha-D-glucose site; these read TRSNY, QCS, NY, and EGGR.

The protein belongs to the hexose 2,3-dehydratase family. Homodimer.

The enzyme catalyses dTDP-4-dehydro-6-deoxy-alpha-D-glucose = dTDP-3,4-didehydro-2,6-dideoxy-alpha-D-glucose + H2O. In terms of biological role, involved in the biosynthesis of forosamine ((4-dimethylamino)-2,3,4,6-tetradeoxy-alpha-D-threo-hexopyranose), a highly deoxygenated sugar component of several bioactive natural products such as the insecticidal spinosyns A and D. Catalyzes the removal of the hydroxyl group at position C-2 of the hexose ring of dTDP-4-dehydro-6-deoxy-alpha-D-glucopyranose, and the oxidation of the hydroxyl group at position C-3 to form a carbonyl functionality. The product of the reaction, dTDP-2,6-dideoxy-D-glycero-hex-2-enos-4-ulose, is a highly unstable diketosugar, which spontaneously forms dTDP-3,4-didehydro-2,6-dideoxy-alpha-D-glucose. The chain is dTDP-4-dehydro-6-deoxy-alpha-D-glucopyranose 2,3-dehydratase from Saccharopolyspora spinosa.